A 357-amino-acid chain; its full sequence is Low-salt glycan biosynthesis nucleotidyltransferase Agl11 (357 aa).

Residues D108 and D221 each contribute to the Mg(2+) site.

The protein belongs to the glucose-1-phosphate thymidylyltransferase family. Mg(2+) is required as a cofactor.

The protein operates within protein modification; protein glycosylation. It participates in cell surface structure biogenesis; S-layer biogenesis. Nucleotidyltransferase involved in N-glycan biosynthetic pathway that takes place under low-salt conditions (1.75 M instead of 3.4 M). Participates in the formation of the tetrasaccharide present at 'Asn-532' of S-layer glycoprotein Csg, consisting of a sulfated hexose, 2 hexoses and rhamnose. Involved in the addition of final rhamnose (sugar 4) of the tetrasaccharide on the dolichol phosphate carrier. The protein is Low-salt glycan biosynthesis nucleotidyltransferase Agl11 (agl11) of Haloferax volcanii (strain ATCC 29605 / DSM 3757 / JCM 8879 / NBRC 14742 / NCIMB 2012 / VKM B-1768 / DS2) (Halobacterium volcanii).